A 166-amino-acid chain; its full sequence is MAKVESQAGELQEKLIAVNRVSKTVKGGRIMSFTALTVVGDGNGRVGYGYGKAREVPAAIQKAMEQAKRNLNKVELNNGTLHHPVRGVHSGSTVFMKPASQGTGIIAGGAMRAVLEVAGIHNVLAKTYGSTNPINVVRATVDALVQGQSPAQIAAKRGLRVEEILG.

In terms of domain architecture, S5 DRBM spans 11–74; that stretch reads LQEKLIAVNR…EQAKRNLNKV (64 aa).

It belongs to the universal ribosomal protein uS5 family. In terms of assembly, part of the 30S ribosomal subunit. Contacts proteins S4 and S8.

Functionally, with S4 and S12 plays an important role in translational accuracy. In terms of biological role, located at the back of the 30S subunit body where it stabilizes the conformation of the head with respect to the body. The chain is Small ribosomal subunit protein uS5 from Aeromonas hydrophila subsp. hydrophila (strain ATCC 7966 / DSM 30187 / BCRC 13018 / CCUG 14551 / JCM 1027 / KCTC 2358 / NCIMB 9240 / NCTC 8049).